The following is a 476-amino-acid chain: Glycogen synthase (476 aa).

ADP-alpha-D-glucose is bound at residue K15.

It belongs to the glycosyltransferase 1 family. Bacterial/plant glycogen synthase subfamily.

It carries out the reaction [(1-&gt;4)-alpha-D-glucosyl](n) + ADP-alpha-D-glucose = [(1-&gt;4)-alpha-D-glucosyl](n+1) + ADP + H(+). It functions in the pathway glycan biosynthesis; glycogen biosynthesis. Functionally, synthesizes alpha-1,4-glucan chains using ADP-glucose. This is Glycogen synthase from Streptococcus agalactiae serotype III (strain NEM316).